Consider the following 318-residue polypeptide: Cytochrome c biogenesis protein CcsA (318 aa).

Transmembrane regions (helical) follow at residues 17–37, 45–65, 75–95, 104–124, 149–169, 224–244, 258–275, and 287–307; these read VLAL…ISFW, SAVV…QLVL, ISNL…AQLL, IVSA…SFAL, VIMC…AVLF, TITV…VWAN, TWAL…HTRF, and VAVA…LLGI.

This sequence belongs to the CcmF/CycK/Ccl1/NrfE/CcsA family. May interact with ccs1.

The protein localises to the cellular thylakoid membrane. Functionally, required during biogenesis of c-type cytochromes (cytochrome c6 and cytochrome f) at the step of heme attachment. The sequence is that of Cytochrome c biogenesis protein CcsA from Prochlorococcus marinus (strain MIT 9303).